The chain runs to 231 residues: Biosynthetic peptidoglycan transglycosylase (231 aa).

Residues 7 to 27 traverse the membrane as a helical segment; the sequence is LLFWLIVVPVLLVLLLQLYFF.

This sequence belongs to the glycosyltransferase 51 family.

It is found in the cell inner membrane. The catalysed reaction is [GlcNAc-(1-&gt;4)-Mur2Ac(oyl-L-Ala-gamma-D-Glu-L-Lys-D-Ala-D-Ala)](n)-di-trans,octa-cis-undecaprenyl diphosphate + beta-D-GlcNAc-(1-&gt;4)-Mur2Ac(oyl-L-Ala-gamma-D-Glu-L-Lys-D-Ala-D-Ala)-di-trans,octa-cis-undecaprenyl diphosphate = [GlcNAc-(1-&gt;4)-Mur2Ac(oyl-L-Ala-gamma-D-Glu-L-Lys-D-Ala-D-Ala)](n+1)-di-trans,octa-cis-undecaprenyl diphosphate + di-trans,octa-cis-undecaprenyl diphosphate + H(+). Its pathway is cell wall biogenesis; peptidoglycan biosynthesis. Functionally, peptidoglycan polymerase that catalyzes glycan chain elongation from lipid-linked precursors. This Janthinobacterium sp. (strain Marseille) (Minibacterium massiliensis) protein is Biosynthetic peptidoglycan transglycosylase.